The sequence spans 107 residues: Phosphoribosyl-ATP pyrophosphatase (107 aa).

Belongs to the PRA-PH family.

It is found in the cytoplasm. It catalyses the reaction 1-(5-phospho-beta-D-ribosyl)-ATP + H2O = 1-(5-phospho-beta-D-ribosyl)-5'-AMP + diphosphate + H(+). It participates in amino-acid biosynthesis; L-histidine biosynthesis; L-histidine from 5-phospho-alpha-D-ribose 1-diphosphate: step 2/9. The chain is Phosphoribosyl-ATP pyrophosphatase from Novosphingobium aromaticivorans (strain ATCC 700278 / DSM 12444 / CCUG 56034 / CIP 105152 / NBRC 16084 / F199).